Here is a 145-residue protein sequence, read N- to C-terminus: Ribosome maturation factor RimP (145 aa).

Belongs to the RimP family.

Its subcellular location is the cytoplasm. Functionally, required for maturation of 30S ribosomal subunits. The sequence is that of Ribosome maturation factor RimP from Borreliella burgdorferi (strain ATCC 35210 / DSM 4680 / CIP 102532 / B31) (Borrelia burgdorferi).